The chain runs to 380 residues: Cytochrome b (380 aa).

Helical transmembrane passes span 33-53 (FGSL…FLAM), 77-98 (WFIR…YLHI), 113-133 (WTIG…GYVL), and 178-198 (FFTF…VHLL). H83 and H97 together coordinate heme b. H182 and H196 together coordinate heme b. H201 serves as a coordination point for a ubiquinone. 4 consecutive transmembrane segments (helical) span residues 226-246 (YKDL…ALFS), 288-308 (LGGV…PILH), 320-340 (LTQT…WIGG), and 347-367 (FVII…VLAP).

The protein belongs to the cytochrome b family. The cytochrome bc1 complex contains 3 respiratory subunits (MT-CYB, CYC1 and UQCRFS1), 2 core proteins (UQCRC1 and UQCRC2) and probably 6 low-molecular weight proteins. Heme b serves as cofactor.

Its subcellular location is the mitochondrion inner membrane. Component of the ubiquinol-cytochrome c reductase complex (complex III or cytochrome b-c1 complex) that is part of the mitochondrial respiratory chain. The b-c1 complex mediates electron transfer from ubiquinol to cytochrome c. Contributes to the generation of a proton gradient across the mitochondrial membrane that is then used for ATP synthesis. The sequence is that of Cytochrome b (mt-cyb) from Lampris guttatus (Opah).